Consider the following 904-residue polypeptide: Mdm2-binding protein (904 aa).

A disordered region spans residues 19-38 (ASREAEHGPEVSSGEGTENQ). The interaction with MDM2 stretch occupies residues 521–904 (MILRKMDKIK…DWVLEKTSKK (384 aa)). Phosphoserine is present on residues Ser-597, Ser-639, Ser-703, and Ser-707. 2 disordered regions span residues 754–784 (ESSE…TERS) and 800–830 (PKLA…SQKH). Over residues 812 to 830 (SMHESKTSRQIKESRSQKH) the composition is skewed to basic and acidic residues.

The protein belongs to the MTBP family. In terms of assembly, interacts with MDM2.

In terms of biological role, inhibits cell migration in vitro and suppresses the invasive behavior of tumor cells. May play a role in MDM2-dependent p53/TP53 homeostasis in unstressed cells. Inhibits autoubiquitination of MDM2, thereby enhancing MDM2 stability. This promotes MDM2-mediated ubiquitination of p53/TP53 and its subsequent degradation. The chain is Mdm2-binding protein (MTBP) from Homo sapiens (Human).